The primary structure comprises 218 residues: Pyridoxine/pyridoxamine 5'-phosphate oxidase (218 aa).

Residues 14–17 (RREY) and Lys-72 each bind substrate. Residues 67 to 72 (RIVLLK), 82 to 83 (YT), Arg-88, Lys-89, and Gln-111 each bind FMN. Residues Tyr-129, Arg-133, and Ser-137 each coordinate substrate. FMN contacts are provided by residues 146 to 147 (QS) and Trp-191. 197–199 (RLH) serves as a coordination point for substrate. Position 201 (Arg-201) interacts with FMN.

This sequence belongs to the pyridoxamine 5'-phosphate oxidase family. Homodimer. FMN serves as cofactor.

The enzyme catalyses pyridoxamine 5'-phosphate + O2 + H2O = pyridoxal 5'-phosphate + H2O2 + NH4(+). It catalyses the reaction pyridoxine 5'-phosphate + O2 = pyridoxal 5'-phosphate + H2O2. The protein operates within cofactor metabolism; pyridoxal 5'-phosphate salvage; pyridoxal 5'-phosphate from pyridoxamine 5'-phosphate: step 1/1. It participates in cofactor metabolism; pyridoxal 5'-phosphate salvage; pyridoxal 5'-phosphate from pyridoxine 5'-phosphate: step 1/1. Catalyzes the oxidation of either pyridoxine 5'-phosphate (PNP) or pyridoxamine 5'-phosphate (PMP) into pyridoxal 5'-phosphate (PLP). This is Pyridoxine/pyridoxamine 5'-phosphate oxidase from Enterobacter sp. (strain 638).